The primary structure comprises 113 residues: Urocortin-2 (113 aa).

The first 23 residues, 1-23, serve as a signal peptide directing secretion; that stretch reads MMTRWALVVFVVLMLDRILFVPG. Positions 24 to 71 are excised as a propeptide; sequence TPIPTFQLLPQNSLETTPSSVTSESSSGTTTGPSASWSNSKASPYLDT. A compositionally biased stretch (low complexity) spans 37 to 61; the sequence is LETTPSSVTSESSSGTTTGPSASWS. The interval 37–64 is disordered; that stretch reads LETTPSSVTSESSSGTTTGPSASWSNSK. A Valine amide; partial modification is found at valine 110.

The protein belongs to the sauvagine/corticotropin-releasing factor/urotensin I family. In terms of assembly, binds with high affinity to CRF receptors 2-alpha and 2-beta. In terms of processing, glycosylated.

Its subcellular location is the secreted. Its function is as follows. Suppresses food intake, delays gastric emptying and decreases heat-induced edema. Might represent an endogenous ligand for maintaining homeostasis after stress. This Mus musculus (Mouse) protein is Urocortin-2 (Ucn2).